A 1020-amino-acid polypeptide reads, in one-letter code: Retinoblastoma-related protein (1020 aa).

Composition is skewed to polar residues over residues 382 to 391 (SPTKTITSPL) and 398 to 409 (ASHTNGILGSTN). A disordered region spans residues 382 to 409 (SPTKTITSPLSPHRSPASHTNGILGSTN). Positions 415–616 (TPVSTAMTTA…EKGSSMYNSL (202 aa)) are domain A. Residues 415–869 (TPVSTAMTTA…NEIFIPAAKP (455 aa)) are pocket. Residues 617 to 737 (TVARPSLSAE…PGGGGETCAE (121 aa)) are spacer. The interval 738–869 (TGINIFFSKI…NEIFIPAAKP (132 aa)) is domain B.

It belongs to the retinoblastoma protein (RB) family.

The protein localises to the nucleus. Its function is as follows. Regulator of biological processes that recruits a histone deacetylase to control gene transcription. May play a role in the entry into mitosis, negatively regulating the cell proliferation. Formation of stable complexes with geminiviridae replication-associated proteins may create a cellular environment which favors viral DNA replication. This Ricinus communis (Castor bean) protein is Retinoblastoma-related protein (RBR).